We begin with the raw amino-acid sequence, 280 residues long: tRNA pseudouridine synthase A (280 aa).

The active-site Nucleophile is D55. Residue Y110 participates in substrate binding.

It belongs to the tRNA pseudouridine synthase TruA family.

The enzyme catalyses uridine(38/39/40) in tRNA = pseudouridine(38/39/40) in tRNA. Its function is as follows. Formation of pseudouridine at positions 38, 39 and 40 in the anticodon stem and loop of transfer RNAs. This is tRNA pseudouridine synthase A from Methanosphaerula palustris (strain ATCC BAA-1556 / DSM 19958 / E1-9c).